A 115-amino-acid chain; its full sequence is MSVLTQVLALLLLWLTGARCDIQMTQSPASLSASVGETVTITCRASGNIHNYLAWYQQKQGKSPQLLVYNAKTLADGVPSRFSGSGSGTQYSLKINSLQPEDFGSYYCQHFWSTP.

Residues 1-20 (MSVLTQVLALLLLWLTGARC) form the signal peptide. Positions 21–43 (DIQMTQSPASLSASVGETVTITC) are framework-1. Residues Cys-43 and Cys-108 are joined by a disulfide bond. Positions 44-54 (RASGNIHNYLA) are complementarity-determining-1. Positions 55 to 69 (WYQQKQGKSPQLLVY) are framework-2. Residues 70–76 (NAKTLAD) form a complementarity-determining-2 region. Residues 77 to 108 (GVPSRFSGSGSGTQYSLKINSLQPEDFGSYYC) are framework-3. A complementarity-determining-3 region spans residues 109–115 (QHFWSTP).

This chain is Immunoglobulin kappa chain variable 12-41, found in Mus musculus (Mouse).